The chain runs to 104 residues: Ribonuclease P protein component 4 (104 aa).

4 residues coordinate Zn(2+): Cys-63, Cys-66, Cys-89, and Cys-92.

The protein belongs to the eukaryotic/archaeal RNase P protein component 4 family. In terms of assembly, consists of a catalytic RNA component and at least 4-5 protein subunits. Zn(2+) is required as a cofactor.

The protein localises to the cytoplasm. The enzyme catalyses Endonucleolytic cleavage of RNA, removing 5'-extranucleotides from tRNA precursor.. In terms of biological role, part of ribonuclease P, a protein complex that generates mature tRNA molecules by cleaving their 5'-ends. This chain is Ribonuclease P protein component 4, found in Methanosphaera stadtmanae (strain ATCC 43021 / DSM 3091 / JCM 11832 / MCB-3).